A 666-amino-acid polypeptide reads, in one-letter code: NADH-ubiquinone oxidoreductase chain 5 (666 aa).

Helical transmembrane passes span 3 to 23 (LLIL…GRWL), 31 to 51 (FSTL…FEIG), 59 to 78 (IFLV…GFLF), 82 to 101 (TVTM…IYSI), 119 to 139 (IFTF…MFLG), 168 to 190 (LIVN…WVFN), 211 to 231 (FLGF…IGAI), 251 to 271 (TPVS…FLMI), 283 to 303 (ILFI…VTGV), 311 to 333 (VIAY…SCYD), 337 to 357 (FHLA…GSVI), 375 to 395 (FMPL…GFPF), 421 to 441 (YISF…FYSF), 467 to 487 (LLMI…GYLI), 524 to 544 (WLPF…QIFL), 572 to 594 (VLYN…FKIL), and 629 to 649 (YLFF…YSYI).

It belongs to the complex I subunit 5 family.

It is found in the mitochondrion inner membrane. The catalysed reaction is a ubiquinone + NADH + 5 H(+)(in) = a ubiquinol + NAD(+) + 4 H(+)(out). In terms of biological role, core subunit of the mitochondrial membrane respiratory chain NADH dehydrogenase (Complex I) that is believed to belong to the minimal assembly required for catalysis. Complex I functions in the transfer of electrons from NADH to the respiratory chain. The immediate electron acceptor for the enzyme is believed to be ubiquinone. The polypeptide is NADH-ubiquinone oxidoreductase chain 5 (ND5) (Chondrus crispus (Carrageen Irish moss)).